The primary structure comprises 679 residues: Shutoff protein (679 aa).

The tract at residues 178-232 (LFDYLIGESQDPNDLDSEYKLAFTDEDLPQEGQAEKTKQRETLGAVATFGAVLLS) is binding to host EIF4G. The RRM domain occupies 235–353 (RLFTHPVVIK…ELAGANYAEA (119 aa)). Phosphotyrosine; by host occurs at positions 252 and 564. The disordered stretch occupies residues 552-679 (REKSILKRGG…SLQGTRRESS (128 aa)). A compositionally biased stretch (basic and acidic residues) spans 661-679 (PRQETAEKESLQGTRRESS).

It belongs to the adenoviridae shutoff protein family. In terms of assembly, monomer. Interacts with hexon protein; this interaction allows chaperoning and trimerization of hexon proteins. Interacts (via N-terminus) with host initiation factor EIF4G (via C-terminus). Interacts (via RRM domain) with viral mRNAs that contain the tripartite leader; this interaction allows ribosome shunting and expression of viral late mRNAs. In terms of processing, might be cleaved by the viral protease. Post-translationally, phosphorylated. Tyrosine phosphorylation enhances preferential binding to tripartite leader mRNAs and allows ribosome shunting. Methylated. Asymmetric dimethylation by host PRMT1 of the Arg/Gly-rich region may regulate shutoff protein binding to hexon and promote the capsid assembly in the nucleus.

The protein resides in the host cytoplasm. Functionally, protein that inhibits host translation while promoting late viral translation by ribosome shunting. Blocks host cap-dependent translation by binding to eIF4G, displacing MKNK1 from cap initiation complexes and preventing EIF4E phosphorylation. Binds to the tripartite leader sequence of viral late mRNAs and recruits host eIF4G, PABPC1/poly-A binding protein and 40S ribosomes subunits on viral mRNAs, allowing ribosome shunting and efficient translation of late viral mRNAs even though conventional translation via ribosome scanning from the cap has been shut off in the host cell. During assembly, acts as a chaperone protein that helps hexon proteins assembly into trimers. This chain is Shutoff protein, found in Snake adenovirus serotype 1 (SnAdV-1).